Consider the following 28-residue polypeptide: Cycloviolin-B (28 aa).

The cyclopeptide (Gly-Asn) cross-link spans 1–28 (GTACGESCYVLPCFTVGCTCTSSQCFKN). Disulfide bonds link cysteine 4–cysteine 18, cysteine 8–cysteine 20, and cysteine 13–cysteine 25.

In terms of processing, this is a cyclic peptide.

Functionally, probably participates in a plant defense mechanism. Has anti-HIV activity. This is Cycloviolin-B from Leonia cymosa (Sacha uba).